The primary structure comprises 384 residues: 5-amino-6-(D-ribitylamino)uracil--L-tyrosine 4-hydroxyphenyl transferase 2 (384 aa).

Positions 53–286 constitute a Radical SAM core domain; it reads VSYVVNRNIY…IAISRIILHT (234 aa). [4Fe-4S] cluster is bound by residues C67, C71, and C74.

It belongs to the radical SAM superfamily. CofH family. In terms of assembly, consists of two subunits, CofG and CofH. [4Fe-4S] cluster serves as cofactor.

It catalyses the reaction 5-amino-6-(D-ribitylamino)uracil + L-tyrosine + S-adenosyl-L-methionine = 5-amino-5-(4-hydroxybenzyl)-6-(D-ribitylimino)-5,6-dihydrouracil + 2-iminoacetate + 5'-deoxyadenosine + L-methionine + H(+). Its pathway is cofactor biosynthesis; coenzyme F0 biosynthesis. Functionally, catalyzes the radical-mediated synthesis of 5-amino-5-(4-hydroxybenzyl)-6-(D-ribitylimino)-5,6-dihydrouracil from 5-amino-6-(D-ribitylamino)uracil and L-tyrosine. This Methanosarcina acetivorans (strain ATCC 35395 / DSM 2834 / JCM 12185 / C2A) protein is 5-amino-6-(D-ribitylamino)uracil--L-tyrosine 4-hydroxyphenyl transferase 2.